The chain runs to 315 residues: Methionyl-tRNA formyltransferase (315 aa).

112-115 (SLLP) contributes to the (6S)-5,6,7,8-tetrahydrofolate binding site.

The protein belongs to the Fmt family.

It carries out the reaction L-methionyl-tRNA(fMet) + (6R)-10-formyltetrahydrofolate = N-formyl-L-methionyl-tRNA(fMet) + (6S)-5,6,7,8-tetrahydrofolate + H(+). Attaches a formyl group to the free amino group of methionyl-tRNA(fMet). The formyl group appears to play a dual role in the initiator identity of N-formylmethionyl-tRNA by promoting its recognition by IF2 and preventing the misappropriation of this tRNA by the elongation apparatus. The chain is Methionyl-tRNA formyltransferase from Leptospira interrogans serogroup Icterohaemorrhagiae serovar copenhageni (strain Fiocruz L1-130).